The sequence spans 630 residues: A-type voltage-gated potassium channel KCND2 (630 aa).

Residues 1–184 (MAAGVAAWLP…FENPHTSTMA (184 aa)) lie on the Cytoplasmic side of the membrane. Residues 2 to 20 (AAGVAAWLPFARAAAIGWM) form an interaction with KCNIP1, KCNIP2, and other family members region. At Thr38 the chain carries Phosphothreonine. The interval 71 to 90 (ERDFFYHPETQQYFFDRDPD) is interaction with KCNIP1. Residues His105, Cys111, Cys132, and Cys133 each coordinate Zn(2+). The chain crosses the membrane as a helical span at residues 185–206 (LVFYYVTGFFIAVSVIANVVET). Over 207–226 (VPCGSSPGHIKELPCGERYA) the chain is Extracellular. Residues 227–249 (VAFFCLDTACVMIFTVEYLLRLA) traverse the membrane as a helical segment. Over 250 to 256 (AAPSRYR) the chain is Cytoplasmic. A helical membrane pass occupies residues 257-281 (FVRSVMSIIDVVAILPYYIGLVMTD). Residues 282-287 (NEDVSG) are Extracellular-facing. A helical; Voltage-sensor transmembrane segment spans residues 288 to 307 (AFVTLRVFRVFRIFKFSRHS). Residues 308–321 (QGLRILGYTLKSCA) are Cytoplasmic-facing. The S4-S5 linker stretch occupies residues 308-321 (QGLRILGYTLKSCA). The chain crosses the membrane as a helical span at residues 322–345 (SELGFLLFSLTMAIIIFATVMFYA). Over 346–357 (EKGSSASKFTSI) the chain is Extracellular. Positions 358-369 (PAAFWYTIVTMT) form an intramembrane region, helical. Positions 370, 371, 372, and 373 each coordinate K(+). Residues 370-375 (TLGYGD) carry the Selectivity filter motif. An intramembrane segment occupies 370–377 (TLGYGDMV). Over 378–380 (PKT) the chain is Extracellular. A helical membrane pass occupies residues 381–403 (IAGKIFGSICSLSGVLVIALPVP). The Cytoplasmic portion of the chain corresponds to 404-630 (VIVSNFSRIY…GGNIVRVSAL (227 aa)). Ser438 carries the phosphoserine modification. The interval 474-489 (FETQHHHLLHCLEKTT) is required for dendritic targeting. The tract at residues 474 to 630 (FETQHHHLLH…GGNIVRVSAL (157 aa)) is important for normal channel activation and inactivation, for interaction with KCNIP2, and probably other family members as well. Residues Ser548, Ser552, Ser572, and Ser575 each carry the phosphoserine modification. Residues 600 to 623 (IPTPPVTTPEGDDRPESPEYSGGN) are disordered. Phosphothreonine is present on residues Thr602 and Thr607. Ser616 carries the post-translational modification Phosphoserine. The short motif at 627–630 (VSAL) is the PDZ-binding element.

The protein belongs to the potassium channel family. D (Shal) (TC 1.A.1.2) subfamily. Kv4.2/KCND2 sub-subfamily. As to quaternary structure, homotetramer or heterotetramer with KCND1 or KCND3. Associates with the regulatory subunits KCNIP2, KCNIP3 and KCNIP4. Interacts with the regulatory subunit KCNIP1; this interaction mediates the capture of both the N- and C-terminus of KCND2, preventing N-type inactivation and stabilizing the S6 conformation, thereby accelerating closed state inactivation and recovery. Interacts with DPP10, DLG4 and DLG1. In vivo, probably exists as heteromeric complex containing variable proportions of KCND1, KCND2, KCND3, KCNIP1, KCNIP2, KCNIP3, KCNIP4, DPP6 and DPP10. The tetrameric channel can associate with up to four regulatory subunits, such as KCNIP2 or KCNIP4. Interaction with KCNIP3 promotes tetramerization and formation of a functional potassium channel. Interaction with four KCNIP4 chains does not reduce interaction with DPP10. Probably part of a complex consisting of KCNIP1, KCNIP2 isoform 3 and KCND2. Interacts with FLNA and FLNC. Interacts with NCS1/FREQ. Identified in a complex with cAMP-dependent protein kinase (PKA), CAV3, AKAP6 and KCND3 in cardiac myocytes. Interacts (via S1 and S2 helices) with DPP6; this interaction stabilizes the conformation of the S1-S2 helices and facilitates S4 conformational change, including S4 sliding up and down, thereby accelerating activation, inactivation, and recovery. In terms of processing, phosphorylation at Ser-438 in response to MAPK activation is increased in stimulated dendrites. Interaction with KCNIP2 and DPP6 propomtes phosphorylation by PKA at Ser-552. Phosphorylation at Ser-552 has no effect on interaction with KCNIP3, but is required for the regulation of channel activity by KCNIP3. Phosphorylation at Ser-552 leads to KCND2 internalization. Phosphorylated by MAPK in response to signaling via the metabotropic glutamate receptor GRM5. Phosphorylation at Ser-616 is required for the down-regulation of neuronal A-type currents in response to signaling via GRM5. In terms of tissue distribution, detected in brain cortex, hippocampus, dentate gyrus, thalamus and cerebellum. Detected in neurons from the primary visual cortex. Detected in the supraoptic nucleus in hypothalamus, in hippocampus and the habenular nucleus of the thalamus. Detected in the bed nucleus of the stria terminalis. Detected in dendritic fields in the hippocampus CA1 layer, in stratum radiatum, stratum oriens, stratum lacunosum-moleculare and stratum pyramidale. Detected in dendritic fields in the hippocampus CA3 layer and in dentate gyrus. Detected in the cerebellum granule cell layer, where it localizes at synapses. Detected in the main olfactory bulb, especially in the granule cell layer and the external plexiform layer, but also the mitral layer. Detected in heart atrium and ventricle. Detected in heart left ventricle (at protein level). Highly expressed in heart and throughout the brain, with similar levels in cortex and hypothalamus, and much higher levels in hippocampus, dentate gyrus and the habenular nucleus of the thalamus. Detected in brain, and at lower levels in heart atrium and ventricle. Detected in neurons from the bed nucleus of the stria terminalis. Detected in aorta, cardiac and smooth muscle.

The protein localises to the cell membrane. It is found in the cell projection. It localises to the dendrite. Its subcellular location is the synapse. The protein resides in the perikaryon. The protein localises to the postsynaptic cell membrane. It is found in the dendritic spine. It localises to the sarcolemma. Its subcellular location is the cell junction. The protein resides in the membrane. The protein localises to the caveola. The catalysed reaction is K(+)(in) = K(+)(out). With respect to regulation, inhibited by 5 mM 4-aminopyridine (4-AP). Not inhibited by dendrotoxins and by tetraethylammonium (TEA). Inhibited by 10 mM flecainide and 20 mM quinidine. Inhibited by the heteropodatoxins HpTx(1), HpTx(2), and HpTx(3). Functionally, voltage-gated potassium channel that mediates transmembrane potassium transport in excitable membranes, primarily in the brain, but also in rodent heart. Mediates the major part of the dendritic A-type current I(SA) in brain neurons. This current is activated at membrane potentials that are below the threshold for action potentials. It regulates neuronal excitability, prolongs the latency before the first spike in a series of action potentials, regulates the frequency of repetitive action potential firing, shortens the duration of action potentials and regulates the back-propagation of action potentials from the neuronal cell body to the dendrites. Contributes to the regulation of the circadian rhythm of action potential firing in suprachiasmatic nucleus neurons, which regulates the circadian rhythm of locomotor activity. Functions downstream of the metabotropic glutamate receptor GRM5 and plays a role in neuronal excitability and in nociception mediated by activation of GRM5. Mediates the transient outward current I(to) in rodent heart left ventricle apex cells, but not in human heart, where this current is mediated by another family member. Forms tetrameric potassium-selective channels through which potassium ions pass in accordance with their electrochemical gradient. The channel alternates between opened and closed conformations in response to the voltage difference across the membrane. Can form functional homotetrameric channels and heterotetrameric channels that contain variable proportions of KCND2 and KCND3; channel properties depend on the type of pore-forming alpha subunits that are part of the channel. In vivo, membranes probably contain a mixture of heteromeric potassium channel complexes. Interaction with specific isoforms of the regulatory subunits KCNIP1, KCNIP2, KCNIP3 or KCNIP4 strongly increases expression at the cell surface and thereby increases channel activity; it modulates the kinetics of channel activation and inactivation, shifts the threshold for channel activation to more negative voltage values, shifts the threshold for inactivation to less negative voltages and accelerates recovery after inactivation. Likewise, interaction with DPP6 or DPP10 promotes expression at the cell membrane and regulates both channel characteristics and activity. Upon depolarization, the channel goes from a resting closed state (C state) to an activated but non-conducting state (C* state), from there, the channel may either inactivate (I state) or open (O state). This Rattus norvegicus (Rat) protein is A-type voltage-gated potassium channel KCND2.